The primary structure comprises 735 residues: 2-5A-dependent ribonuclease (735 aa).

Residues 1-21 are disordered; it reads METPDYNTPQGGTPSAGSQRT. 9 ANK repeats span residues 24–53, 58–87, 91–120, 124–153, 167–197, 201–234, 238–268, 272–301, and 303–328; these read EDDS…DANA, WGWT…DPHR, NGAT…DVNE, NGFT…NVNL, GGAT…EVDA, MGRN…DVNV, RGKT…NIDA, EGKT…DKCD, and LVWI…NPDT. A binding to TMEV Leader protein region spans residues 26–51; the sequence is DSSLIKAVQKGDVVRVQQLLEKGADA. 2-5A binding (P-loop) stretches follow at residues 229–242 and 253–275; these read GADV…GKTP and GLVQ…EGKT. A Protein kinase domain is found at 364 to 584; sequence IHDDYKIAGT…LVDLLGHPFF (221 aa). The segment at 401 to 436 adopts a C6-type zinc-finger fold; that stretch reads CKEVSCLRDCGDHSNLVAFYGREDDKGCLYVCVSLC. Positions 587-722 constitute a KEN domain; that stretch reads WENRYRTLRN…KHFPQPPPRL (136 aa). The disordered stretch occupies residues 714–735; that stretch reads HFPQPPPRLSVPEAVGPGGIQS.

This sequence belongs to the protein kinase superfamily. As to quaternary structure, (Microbial infection) Interacts (via N-terminus) with TMEV leader protein; this interaction prevents RNASEL activation by its substrate 2'-5' oligoadenylates. In terms of assembly, monomer (inactive form) or homodimer. Interacts with ABCE1; this interaction inhibits the RNASEL. The cofactor is Mn(2+). Requires Mg(2+) as cofactor. Expressed in spleen, thymus, lung, testis, kidney, liver and heart.

Its subcellular location is the cytoplasm. The protein resides in the mitochondrion. With respect to regulation, after binding to 2-5A (5'-phosphorylated 2',5'-linked oligoadenylates) the homodimerization and subsequent activation occurs. Inhibited by RNASEL inhibitor ABCE1/RLI, a cytoplasmic member of the ATP-binding cassette (ABC) transporter family. In terms of biological role, endoribonuclease that functions in the interferon (IFN) antiviral response. In INF treated and virus infected cells, RNASEL probably mediates its antiviral effects through a combination of direct cleavage of single-stranded viral RNAs, inhibition of protein synthesis through the degradation of rRNA, induction of apoptosis, and induction of other antiviral genes. RNASEL mediated apoptosis is the result of a JNK-dependent stress-response pathway leading to cytochrome c release from mitochondria and caspase-dependent apoptosis. Therefore, activation of RNASEL could lead to elimination of virus infected cells under some circumstances. In the crosstalk between autophagy and apoptosis proposed to induce autophagy as an early stress response to small double-stranded RNA and at later stages of prolonged stress to activate caspase-dependent proteolytic cleavage of BECN1 to terminate autophagy and promote apoptosis. Might play a central role in the regulation of mRNA turnover. Cleaves 3' of UpNp dimers, with preference for UU and UA sequences, to sets of discrete products ranging from between 4 and 22 nucleotides in length. This Mus musculus (Mouse) protein is 2-5A-dependent ribonuclease (Rnasel).